The chain runs to 332 residues: Galactosylgalactosylxylosylprotein 3-beta-glucuronosyltransferase 1 (332 aa).

The Cytoplasmic portion of the chain corresponds to 1–6 (MPKRRD). Positions 3 to 5 (KRR) are essential for transport from endoplasmic reticulum to Golgi apparatus and interaction with SAR1A. A helical; Signal-anchor for type II membrane protein transmembrane segment spans residues 7 to 27 (ILAIVLIVLPWTLLITVWHQS). Residues 28 to 332 (TLAPLLAVHK…KGFTDPSVEI (305 aa)) are Lumenal-facing. 91-93 (PTY) is a UDP-alpha-D-glucuronate binding site. A phosphothreonine mark is found at threonine 103 and threonine 108. Aspartate 122 contacts UDP-alpha-D-glucuronate. N-linked (GlcNAc...) asparagine glycosylation is present at asparagine 140. The UDP-alpha-D-glucuronate site is built by arginine 165 and arginine 170. The N-linked (GlcNAc...) asparagine glycan is linked to asparagine 184. 195-197 (DDD) contributes to the UDP-alpha-D-glucuronate binding site. Residue aspartate 197 participates in Mn(2+) binding. Positions 243 to 252 (FDPHRPFAID) are interaction with galactose moiety of substrate glycoprotein. The Proton donor/acceptor role is filled by glutamate 282. N-linked (GlcNAc...) asparagine glycosylation occurs at asparagine 301. Residue 309–311 (HTR) coordinates UDP-alpha-D-glucuronate.

This sequence belongs to the glycosyltransferase 43 family. In terms of assembly, homodimer. Interacts with SAR1A. Mn(2+) serves as cofactor. In terms of processing, the soluble form derives from the membrane form by proteolytic processing.

Its subcellular location is the golgi apparatus membrane. It is found in the secreted. The enzyme catalyses 3-O-(beta-D-galactosyl-(1-&gt;3)-beta-D-galactosyl-(1-&gt;4)-beta-D-xylosyl)-L-seryl-[protein] + UDP-alpha-D-glucuronate = 3-O-(beta-D-GlcA-(1-&gt;3)-beta-D-Gal-(1-&gt;3)-beta-D-Gal-(1-&gt;4)-beta-D-Xyl)-L-seryl-[protein] + UDP + H(+). It functions in the pathway protein modification; protein glycosylation. In terms of biological role, involved in the biosynthesis of L2/HNK-1 carbohydrate epitope on glycoproteins. Can also play a role in glycosaminoglycan biosynthesis. Substrates include asialo-orosomucoid (ASOR), asialo-fetuin, and asialo-neural cell adhesion molecule. Requires sphingomyelin for activity: stearoyl-sphingomyelin was the most effective, followed by palmitoyl-sphingomyelin and lignoceroyl-sphingomyelin. Activity was demonstrated only for sphingomyelin with a saturated fatty acid and not for that with an unsaturated fatty acid, regardless of the length of the acyl group. The sequence is that of Galactosylgalactosylxylosylprotein 3-beta-glucuronosyltransferase 1 from Pan troglodytes (Chimpanzee).